Here is a 142-residue protein sequence, read N- to C-terminus: Putative pre-16S rRNA nuclease (142 aa).

It belongs to the YqgF nuclease family.

The protein localises to the cytoplasm. Functionally, could be a nuclease involved in processing of the 5'-end of pre-16S rRNA. This is Putative pre-16S rRNA nuclease from Mycoplasmoides gallisepticum (strain R(low / passage 15 / clone 2)) (Mycoplasma gallisepticum).